The following is a 209-amino-acid chain: Large ribosomal subunit protein uL3 (209 aa).

Glutamine 150 carries the N5-methylglutamine modification.

This sequence belongs to the universal ribosomal protein uL3 family. Part of the 50S ribosomal subunit. Forms a cluster with proteins L14 and L19. Post-translationally, methylated by PrmB.

Functionally, one of the primary rRNA binding proteins, it binds directly near the 3'-end of the 23S rRNA, where it nucleates assembly of the 50S subunit. The protein is Large ribosomal subunit protein uL3 of Klebsiella pneumoniae (strain 342).